The sequence spans 423 residues: p-aminobenzoyl-glutamate hydrolase subunit A homolog (423 aa).

Belongs to the peptidase M20 family. The cofactor is Mn(2+).

Functionally, catalyzes the cleavage of p-aminobenzoyl-glutamate (PABA-GLU) to form p-aminobenzoate (PABA) and glutamate. In Haemophilus influenzae (strain ATCC 51907 / DSM 11121 / KW20 / Rd), this protein is p-aminobenzoyl-glutamate hydrolase subunit A homolog (abgA).